The primary structure comprises 465 residues: Intraflagellar transport protein 54 (465 aa).

Disordered stretches follow at residues 119–301 and 347–366; these read VRSN…GFTM and LHGD…DKKP. Residues 144–207 adopt a coiled-coil conformation; it reads LEALAREKAE…KQKQQQQQQQ (64 aa). Positions 146-198 are enriched in basic and acidic residues; it reads ALAREKAEKERQRREQEQQERERKERERQEKEREEREKHELESRERAEAEQWK. A compositionally biased stretch (low complexity) spans 199–220; that stretch reads QKQQQQQQQQQSAISPQKSPPK. Residues 222–242 are compositionally biased toward basic and acidic residues; sequence RFADDDKTRVEEHQPVIERPH.

Belongs to the TRAF3IP1 family.

It is found in the cell projection. The protein resides in the cilium. The protein localises to the flagellum. It localises to the cytoplasm. Its subcellular location is the cytoskeleton. It is found in the flagellum axoneme. The protein resides in the flagellum basal body. Its function is as follows. Component of the intraflagellar transport complex B (IFT-B) involved in flagellar assembly. The polypeptide is Intraflagellar transport protein 54 (Giardia intestinalis (strain ATCC 50803 / WB clone C6) (Giardia lamblia)).